Reading from the N-terminus, the 124-residue chain is Vitelline membrane protein Vm32E (124 aa).

Residues 1–19 form the signal peptide; sequence MKTVAFLAVVVLFAAFACA. In terms of domain architecture, VM spans 42–81; it reads SVPAPPCPKNYLFSCQPNLVPAPCAQQAAPAAYGSAGAYT.

It belongs to the vitelline membrane family.

It is found in the secreted. In terms of biological role, major early eggshell protein. This is Vitelline membrane protein Vm32E from Drosophila pseudoobscura pseudoobscura (Fruit fly).